The primary structure comprises 593 residues: AT-rich interactive domain-containing protein 3A (593 aa).

A disordered region spans residues 14–222 (QQRARQELEA…PQLQPPDHGD (209 aa)). The span at 41 to 53 (AAPDEDREPESAR) shows a compositional bias: basic and acidic residues. The segment covering 54–87 (MQRAQMAALAAMRAAAAGLGHPASPGGSEDGPPG) has biased composition (low complexity). Phosphoserine is present on residues serine 77, serine 81, and serine 88. Residue threonine 98 is modified to Phosphothreonine. A phosphoserine mark is found at serine 101 and serine 119. The span at 104 to 127 (RGREGPGEEHFEDMASDEDMKPKW) shows a compositional bias: basic and acidic residues. The interval 119 to 156 (SDEDMKPKWEEEEMEEDLGEDEEEEEEDYEDEEEEEDE) is acidic. Residues 128–158 (EEEEMEEDLGEDEEEEEEDYEDEEEEEDEEG) are compositionally biased toward acidic residues. Residues 238–330 (DPKRKEFLDD…YLYPYECEKR (93 aa)) form the ARID domain. Phosphoserine occurs at positions 353 and 362. Residues lysine 398, lysine 399, lysine 452, and lysine 462 each participate in a glycyl lysine isopeptide (Lys-Gly) (interchain with G-Cter in SUMO2) cross-link. Positions 444 to 541 (AALEQLREKL…GVLFAQPPAP (98 aa)) constitute an REKLES domain. Residues 445–488 (ALEQLREKLESAEPPEKKMALVADEQQRLMQRALQQNFLAMAAQ) are important for nuclear localization. Residues 490–513 (PMSIRINSQASESRQDSAVNLTGT) form a homodimerization region. Disordered regions lie at residues 497-516 (SQAS…TNGS) and 539-593 (PAPT…NSLP). Positions 537 to 557 (QPPAPTPTSAPNKGGGGGGGS) are important for cytoplasmic localization. The span at 549–576 (KGGGGGGGSSSNAGGRGGNTGTSGGQAG) shows a compositional bias: gly residues. Low complexity predominate over residues 580 to 593 (LSTPSTSTSNNSLP).

In terms of assembly, homodimer. Heterodimer with ARID3B. Interacts with E2F1. Interacts with GTF2I and BTK. As to expression, widely expressed, with highest expression in skeletal muscle, thalamus, and colon.

The protein localises to the nucleus. It localises to the cytoplasm. In terms of biological role, transcription factor which may be involved in the control of cell cycle progression by the RB1/E2F1 pathway and in B-cell differentiation. The protein is AT-rich interactive domain-containing protein 3A (ARID3A) of Homo sapiens (Human).